Consider the following 67-residue polypeptide: Inosine/xanthosine triphosphatase (67 aa).

The protein belongs to the YjjX NTPase family. In terms of assembly, homodimer. The cofactor is Mg(2+). It depends on Mn(2+) as a cofactor.

It carries out the reaction XTP + H2O = XDP + phosphate + H(+). The enzyme catalyses ITP + H2O = IDP + phosphate + H(+). In terms of biological role, phosphatase that hydrolyzes non-canonical purine nucleotides such as XTP and ITP to their respective diphosphate derivatives. Probably excludes non-canonical purines from DNA/RNA precursor pool, thus preventing their incorporation into DNA/RNA and avoiding chromosomal lesions. This Enterobacter cloacae protein is Inosine/xanthosine triphosphatase.